A 431-amino-acid chain; its full sequence is Adenylosuccinate synthetase (431 aa).

GTP-binding positions include 12–18 (GDEGKGK) and 40–42 (GHT). Residue Asp13 is the Proton acceptor of the active site. 2 residues coordinate Mg(2+): Asp13 and Gly40. IMP is bound by residues 13 to 16 (DEGK), 38 to 41 (NAGH), Thr130, Arg144, Gln225, Thr240, and Arg304. Catalysis depends on His41, which acts as the Proton donor. 300-306 (ATTGRPR) serves as a coordination point for substrate. GTP-binding positions include Arg306, 332-334 (KLD), and 414-416 (SVG).

Belongs to the adenylosuccinate synthetase family. Homodimer. The cofactor is Mg(2+).

Its subcellular location is the cytoplasm. The enzyme catalyses IMP + L-aspartate + GTP = N(6)-(1,2-dicarboxyethyl)-AMP + GDP + phosphate + 2 H(+). It participates in purine metabolism; AMP biosynthesis via de novo pathway; AMP from IMP: step 1/2. Functionally, plays an important role in the de novo pathway of purine nucleotide biosynthesis. Catalyzes the first committed step in the biosynthesis of AMP from IMP. The sequence is that of Adenylosuccinate synthetase from Geotalea daltonii (strain DSM 22248 / JCM 15807 / FRC-32) (Geobacter daltonii).